A 788-amino-acid polypeptide reads, in one-letter code: Protein TRS1 (788 aa).

Disordered stretches follow at residues 1 to 82 (MAQR…NFWH) and 610 to 663 (IHKK…PSRV). Residues 16–25 (RGRGAGGPSG) are compositionally biased toward gly residues. Residues 26 to 56 (VGSSPPSSCVPMGATSTAGTGASAAPTATPG) show a composition bias toward low complexity. Residues 74 to 248 (SGNNSNFWHG…HGAGEVVRLY (175 aa)) are RNA-binding. Residues 651–660 (LRRDDEDWKP) show a composition bias toward basic and acidic residues. Residues 672-788 (LDETFWVLGS…NVATHYHYNA (117 aa)) form an interaction with host EIF2AK2/PKR region.

This sequence belongs to the herpesviridae US22 family. As to quaternary structure, interacts with host EIF2AK2/PKR; this interaction retains EIF2AK2 to the host nucleus and prevents its activation. Interaction (via N-terminus) with host BECN1; this interaction inhibits host autophagy. Interacts with the viral DNA polymerase accessory subunit UL44. Interacts with host HSPA5.

It is found in the virion. The protein resides in the host cytoplasm. Its subcellular location is the host nucleus. Inhibits the establishment of the antiviral state in the infected cell. Prevents the phosphorylation of the host eukaryotic translation initiation factor eIF-2alpha/EIF2S1 and thus the shutoff of viral and cellular protein synthesis by directly interacting with EIF2AK2/PKR. Prevents stress granule formation in response to eIF-2alpha/EIF2S1 phosphorylation, thereby rescuing viral replication and protein synthesis. Also inhibits host autophagy by interacting with host Beclin-1/BECN1. The protein is Protein TRS1 (TRS1) of Human cytomegalovirus (strain Merlin) (HHV-5).